The sequence spans 35 residues: uncharacterized protein (35 aa).

The helical transmembrane segment at L10–L30 threads the bilayer.

Its subcellular location is the membrane. This is an uncharacterized protein from Salmonella typhimurium (strain LT2 / SGSC1412 / ATCC 700720).